Reading from the N-terminus, the 908-residue chain is Protein translocase subunit SecA (908 aa).

ATP contacts are provided by residues Q87, 105–109 (GEGKT), and D513. Residues 852 to 863 (ARRAQAQHATAE) show a composition bias toward low complexity. Residues 852–908 (ARRAQAQHATAENQLADDEAEAASPQTVVRDERKVGRNEPCPCGSGKKYKQCHGKID) are disordered. Residues C892, C894, C903, and H904 each contribute to the Zn(2+) site. Residues 898 to 908 (KKYKQCHGKID) are compositionally biased toward basic residues.

The protein belongs to the SecA family. Monomer and homodimer. Part of the essential Sec protein translocation apparatus which comprises SecA, SecYEG and auxiliary proteins SecDF-YajC and YidC. It depends on Zn(2+) as a cofactor.

The protein localises to the cell inner membrane. Its subcellular location is the cytoplasm. It carries out the reaction ATP + H2O + cellular proteinSide 1 = ADP + phosphate + cellular proteinSide 2.. Its function is as follows. Part of the Sec protein translocase complex. Interacts with the SecYEG preprotein conducting channel. Has a central role in coupling the hydrolysis of ATP to the transfer of proteins into and across the cell membrane, serving both as a receptor for the preprotein-SecB complex and as an ATP-driven molecular motor driving the stepwise translocation of polypeptide chains across the membrane. In Vibrio atlanticus (strain LGP32) (Vibrio splendidus (strain Mel32)), this protein is Protein translocase subunit SecA.